We begin with the raw amino-acid sequence, 99 residues long: Probable small ribosomal subunit protein cS23 (99 aa).

This sequence belongs to the chloroplast-specific ribosomal protein cS23 family. As to quaternary structure, part of the 30S ribosomal subunit.

Its function is as follows. Probably a ribosomal protein or a ribosome-associated protein. In Synechococcus sp. (strain JA-2-3B'a(2-13)) (Cyanobacteria bacterium Yellowstone B-Prime), this protein is Probable small ribosomal subunit protein cS23.